We begin with the raw amino-acid sequence, 293 residues long: Protease HtpX (293 aa).

2 helical membrane passes run 4-24 and 34-54; these read IALF…VLSL and GLMI…LLMS. His-139 lines the Zn(2+) pocket. Glu-140 is a catalytic residue. Zn(2+) is bound at residue His-143. Transmembrane regions (helical) follow at residues 158–178 and 193–213; these read IVNT…AGFL and MVYF…ASII. Residue Glu-222 participates in Zn(2+) binding.

The protein belongs to the peptidase M48B family. Requires Zn(2+) as cofactor.

It is found in the cell inner membrane. This is Protease HtpX from Yersinia enterocolitica serotype O:8 / biotype 1B (strain NCTC 13174 / 8081).